Reading from the N-terminus, the 119-residue chain is Large ribosomal subunit protein bL20 (119 aa).

The protein belongs to the bacterial ribosomal protein bL20 family.

Functionally, binds directly to 23S ribosomal RNA and is necessary for the in vitro assembly process of the 50S ribosomal subunit. It is not involved in the protein synthesizing functions of that subunit. The chain is Large ribosomal subunit protein bL20 from Clostridium perfringens (strain ATCC 13124 / DSM 756 / JCM 1290 / NCIMB 6125 / NCTC 8237 / Type A).